The chain runs to 403 residues: Decapping and exoribonuclease protein 1 (403 aa).

Glu-223 contributes to the a divalent metal cation binding site. Glu-260 contacts substrate. Positions 262, 273, and 274 each coordinate a divalent metal cation. Substrate contacts are provided by Lys-275 and Gln-297.

The protein belongs to the DXO/Dom3Z family. It depends on a divalent metal cation as a cofactor.

The protein localises to the cytoplasm. The enzyme catalyses a 5'-end NAD(+)-phospho-ribonucleoside in mRNA + H2O = a 5'-end phospho-ribonucleoside in mRNA + NAD(+) + H(+). It carries out the reaction a 5'-end (N(7)-methyl 5'-triphosphoguanosine)-ribonucleoside-ribonucleotide in mRNA + H2O = a (N(7)-methyl 5'-triphosphoguanosine)-nucleoside + a 5'-end phospho-ribonucleoside in mRNA + H(+). Decapping enzyme for NAD-capped RNAs: specifically hydrolyzes the nicotinamide adenine dinucleotide (NAD) cap from a subset of RNAs by removing the entire NAD moiety from the 5'-end of an NAD-capped RNA. The NAD-cap is present at the 5'-end of some RNAs and snoRNAs. In contrast to the canonical 5'-end N7 methylguanosine (m7G) cap, the NAD cap promotes mRNA decay. Also acts as a non-canonical decapping enzyme that removes the entire cap structure of m7G capped or incompletely capped RNAs and mediates their subsequent degradation. Has decapping and 5'-3' exonuclease activities. Has decapping activity toward incomplete 5'-end cap mRNAs such as unmethylated 5'-end-capped RNA to release GpppN and 5'-end monophosphate RNA. The 5'-end monophosphate RNA is then degraded by the 5'-3' exoribonuclease activity, enabling this enzyme to decap and degrade incompletely capped mRNAs. This chain is Decapping and exoribonuclease protein 1, found in Kluyveromyces lactis (strain ATCC 8585 / CBS 2359 / DSM 70799 / NBRC 1267 / NRRL Y-1140 / WM37) (Yeast).